Consider the following 441-residue polypeptide: uncharacterized protein (441 aa).

Helical transmembrane passes span 68 to 88 (MAIA…GPFA), 110 to 130 (ALIA…PLLV), 131 to 151 (GALV…AALP), 164 to 184 (SVAI…MLLP), 194 to 214 (GASA…LWSL), 229 to 246 (AIHG…LHGA), 260 to 280 (SGLA…LLLV), 287 to 307 (AVGG…GAFL), 337 to 357 (VAAA…LGVA), 384 to 404 (VQDA…AALI), and 412 to 432 (VFVL…TIVG).

The protein belongs to the major facilitator superfamily.

It is found in the cell membrane. This is an uncharacterized protein from Mycobacterium tuberculosis (strain ATCC 25618 / H37Rv).